Here is a 116-residue protein sequence, read N- to C-terminus: Large ribosomal subunit protein bL20 (116 aa).

The protein belongs to the bacterial ribosomal protein bL20 family.

Functionally, binds directly to 23S ribosomal RNA and is necessary for the in vitro assembly process of the 50S ribosomal subunit. It is not involved in the protein synthesizing functions of that subunit. The sequence is that of Large ribosomal subunit protein bL20 from Bacteroides fragilis (strain ATCC 25285 / DSM 2151 / CCUG 4856 / JCM 11019 / LMG 10263 / NCTC 9343 / Onslow / VPI 2553 / EN-2).